The sequence spans 562 residues: NAD-dependent malic enzyme (562 aa).

Tyrosine 101 serves as the catalytic Proton donor. Arginine 154 is a binding site for NAD(+). The active-site Proton acceptor is the lysine 172. Residues glutamate 243, aspartate 244, and aspartate 267 each coordinate a divalent metal cation. The NAD(+) site is built by aspartate 267 and asparagine 415.

Belongs to the malic enzymes family. Homotetramer. Mg(2+) serves as cofactor. It depends on Mn(2+) as a cofactor.

The enzyme catalyses (S)-malate + NAD(+) = pyruvate + CO2 + NADH. It carries out the reaction oxaloacetate + H(+) = pyruvate + CO2. The polypeptide is NAD-dependent malic enzyme (Shewanella baltica (strain OS155 / ATCC BAA-1091)).